Consider the following 674-residue polypeptide: Slender lobes-like protein (674 aa).

Disordered regions lie at residues 65 to 137 (LEKS…NASK), 168 to 321 (NELN…TIKK), and 352 to 382 (QKSRRQSLHVPSPELAAKNPKLRRRSERVEV). Basic residues predominate over residues 73-97 (PKKKVQTKKHLPPVRKKDSVKRRRI). A compositionally biased stretch (polar residues) spans 127 to 137 (NQSNCSSNASK). A compositionally biased stretch (acidic residues) spans 216 to 228 (VDSDDEEEQDQDQ). A compositionally biased stretch (basic and acidic residues) spans 233–245 (KPAESENHSEIKK). S248 carries the phosphoserine modification. Residues 272–312 (EDPKEAGKNEESDKDKPAENGKSDKDKQAETEMSDEDKPSE) show a composition bias toward basic and acidic residues. Phosphoserine is present on residues S358 and S391. 2 disordered regions span residues 395-585 (MVAE…AGYV) and 618-659 (KYFR…NSAK). The span at 400 to 410 (KRQKNKRKRLS) shows a compositional bias: basic residues. S414 is modified (phosphoserine). Positions 548–558 (AKQKKKGKKKQ) are enriched in basic residues.

This is Slender lobes-like protein from Drosophila melanogaster (Fruit fly).